Here is a 138-residue protein sequence, read N- to C-terminus: Transcription antitermination protein NusB (138 aa).

This sequence belongs to the NusB family.

In terms of biological role, involved in transcription antitermination. Required for transcription of ribosomal RNA (rRNA) genes. Binds specifically to the boxA antiterminator sequence of the ribosomal RNA (rrn) operons. The chain is Transcription antitermination protein NusB from Helicobacter pylori (strain J99 / ATCC 700824) (Campylobacter pylori J99).